Consider the following 118-residue polypeptide: Holo-[acyl-carrier-protein] synthase (118 aa).

Residues aspartate 8 and glutamate 58 each coordinate Mg(2+).

The protein belongs to the P-Pant transferase superfamily. AcpS family. The cofactor is Mg(2+).

Its subcellular location is the cytoplasm. The catalysed reaction is apo-[ACP] + CoA = holo-[ACP] + adenosine 3',5'-bisphosphate + H(+). Transfers the 4'-phosphopantetheine moiety from coenzyme A to a Ser of acyl-carrier-protein. This chain is Holo-[acyl-carrier-protein] synthase, found in Streptococcus uberis (strain ATCC BAA-854 / 0140J).